We begin with the raw amino-acid sequence, 172 residues long: Large ribosomal subunit protein uL10 (172 aa).

This sequence belongs to the universal ribosomal protein uL10 family. In terms of assembly, part of the ribosomal stalk of the 50S ribosomal subunit. The N-terminus interacts with L11 and the large rRNA to form the base of the stalk. The C-terminus forms an elongated spine to which L12 dimers bind in a sequential fashion forming a multimeric L10(L12)X complex.

Functionally, forms part of the ribosomal stalk, playing a central role in the interaction of the ribosome with GTP-bound translation factors. This Francisella tularensis subsp. mediasiatica (strain FSC147) protein is Large ribosomal subunit protein uL10.